A 397-amino-acid chain; its full sequence is uncharacterized protein (397 aa).

12 helical membrane-spanning segments follow: residues 10 to 30 (FIIF…YAVM), 48 to 68 (GLLV…VTII), 76 to 96 (PVLL…ALAP), 106 to 126 (ILSA…ASEM), 141 to 161 (GGLT…GDVL), 165 to 185 (AVFS…MAAV), 209 to 229 (LFSF…YTFI), 242 to 262 (VGIT…NFFA), 274 to 294 (MIGV…IAIY), 296 to 316 (AAAI…PPLL), 334 to 354 (VSVS…GMIL), and 363 to 383 (LFAG…FAHL).

This sequence belongs to the major facilitator superfamily.

Its subcellular location is the cell membrane. This is an uncharacterized protein from Bacillus subtilis (strain 168).